Consider the following 88-residue polypeptide: Serine protease inhibitor Kazal-type 11 (88 aa).

The signal sequence occupies residues 1–24; sequence MSSTWIKFLFILTLVLLPYFVAES. The region spanning 32 to 87 is the Kazal-like domain; it reads LRKVPNCTLYKSESDCSRTLIPVCADNQMTYYNACYFCLEQLVSPIKYKYHGICTK. N-linked (GlcNAc...) asparagine glycosylation is present at asparagine 37. Intrachain disulfides connect cysteine 38/cysteine 69, cysteine 47/cysteine 66, and cysteine 55/cysteine 85.

Expressed in epydiymis, in the caput. Also expressed in seminal vesicles.

The protein resides in the secreted. Probable serine protease inhibitor. The chain is Serine protease inhibitor Kazal-type 11 (Spink11) from Mus musculus (Mouse).